The following is a 403-amino-acid chain: 4-hydroxy-3-methylbut-2-en-1-yl diphosphate synthase (flavodoxin) (403 aa).

The segment covering 1 to 16 has biased composition (basic and acidic residues); it reads MNTENPIEKPFRKTGD. The tract at residues 1–31 is disordered; it reads MNTENPIEKPFRKTGDPVDLTSESPLHPRRK. Residues Cys-291, Cys-294, Cys-326, and Glu-333 each coordinate [4Fe-4S] cluster.

This sequence belongs to the IspG family. [4Fe-4S] cluster is required as a cofactor.

It carries out the reaction (2E)-4-hydroxy-3-methylbut-2-enyl diphosphate + oxidized [flavodoxin] + H2O + 2 H(+) = 2-C-methyl-D-erythritol 2,4-cyclic diphosphate + reduced [flavodoxin]. The protein operates within isoprenoid biosynthesis; isopentenyl diphosphate biosynthesis via DXP pathway; isopentenyl diphosphate from 1-deoxy-D-xylulose 5-phosphate: step 5/6. Its function is as follows. Converts 2C-methyl-D-erythritol 2,4-cyclodiphosphate (ME-2,4cPP) into 1-hydroxy-2-methyl-2-(E)-butenyl 4-diphosphate. In Bifidobacterium longum (strain NCC 2705), this protein is 4-hydroxy-3-methylbut-2-en-1-yl diphosphate synthase (flavodoxin).